Reading from the N-terminus, the 70-residue chain is MDILKKSLFLILFLGVVSLSICEEEKRENEEEMEQDDEQSEMKRALWKEVLKNAGKAALNEINNLVQGGQ.

A signal peptide spans 1–22; it reads MDILKKSLFLILFLGVVSLSIC. The propeptide occupies 23–44; that stretch reads EEEKRENEEEMEQDDEQSEMKR. Gln-67 carries the post-translational modification Glutamine amide. Positions 68–70 are excised as a propeptide; the sequence is GGQ.

This sequence belongs to the frog skin active peptide (FSAP) family. Expressed by the skin glands.

The protein localises to the secreted. The protein resides in the target cell membrane. Its function is as follows. Antimicrobial peptide which inhibits the growth of Gram-negative (MIC=16-64 uM) and Gram-positive bacteria (MIC=32 uM), and pathogenic yeast Candida albicans (MIC=16 uM). Shows a broad-spectrum of anticancer activities against several cancer cell lines. Also shows slight cytotoxicity on human dermal microvascular endothelium cells (IC(50)=4.85 uM). Induces low hemolysis against horse erythrocytes. This Pithecopus hypochondrialis (Orange-legged leaf frog) protein is Dermaseptin-PH.